Here is a 785-residue protein sequence, read N- to C-terminus: Endonuclease MutS2 (785 aa).

335–342 (GPNTGGKT) provides a ligand contact to ATP. The region spanning 710–785 (LDLRGERYED…GNGVTIVEFK (76 aa)) is the Smr domain.

Belongs to the DNA mismatch repair MutS family. MutS2 subfamily. Homodimer. Binds to stalled ribosomes, contacting rRNA.

Endonuclease that is involved in the suppression of homologous recombination and thus may have a key role in the control of bacterial genetic diversity. Functionally, acts as a ribosome collision sensor, splitting the ribosome into its 2 subunits. Detects stalled/collided 70S ribosomes which it binds and splits by an ATP-hydrolysis driven conformational change. Acts upstream of the ribosome quality control system (RQC), a ribosome-associated complex that mediates the extraction of incompletely synthesized nascent chains from stalled ribosomes and their subsequent degradation. Probably generates substrates for RQC. This Listeria innocua serovar 6a (strain ATCC BAA-680 / CLIP 11262) protein is Endonuclease MutS2.